The primary structure comprises 264 residues: Thymidylate synthase (264 aa).

DUMP-binding positions include R21 and 126-127 (RR). Residue C146 is the Nucleophile of the active site. DUMP contacts are provided by residues 166–169 (RSAD), N177, and 207–209 (HLY). Residue D169 participates in (6R)-5,10-methylene-5,6,7,8-tetrahydrofolate binding. A263 is a (6R)-5,10-methylene-5,6,7,8-tetrahydrofolate binding site.

It belongs to the thymidylate synthase family. Bacterial-type ThyA subfamily. As to quaternary structure, homodimer.

Its subcellular location is the cytoplasm. The enzyme catalyses dUMP + (6R)-5,10-methylene-5,6,7,8-tetrahydrofolate = 7,8-dihydrofolate + dTMP. It functions in the pathway pyrimidine metabolism; dTTP biosynthesis. In terms of biological role, catalyzes the reductive methylation of 2'-deoxyuridine-5'-monophosphate (dUMP) to 2'-deoxythymidine-5'-monophosphate (dTMP) while utilizing 5,10-methylenetetrahydrofolate (mTHF) as the methyl donor and reductant in the reaction, yielding dihydrofolate (DHF) as a by-product. This enzymatic reaction provides an intracellular de novo source of dTMP, an essential precursor for DNA biosynthesis. In Rhodopseudomonas palustris (strain HaA2), this protein is Thymidylate synthase.